A 435-amino-acid polypeptide reads, in one-letter code: Cell adhesion molecule 2 (435 aa).

An N-terminal signal peptide occupies residues M1–G24. At Q25–H367 the chain is on the extracellular side. The 93-residue stretch at P27 to T119 folds into the Ig-like V-type domain. Residues N31 and N51 are each glycosylated (N-linked (GlcNAc...) asparagine). 3 disulfide bridges follow: C44-C104, C146-C203, and C248-C296. Ig-like C2-type domains follow at residues P127–Q219 and P227–I312. Residue N291 is glycosylated (N-linked (GlcNAc...) asparagine). Positions T341 to S351 are enriched in low complexity. Positions T341 to A360 are disordered. Residues A368 to L388 form a helical membrane-spanning segment. Topologically, residues G389–I435 are cytoplasmic. Residue S423 is modified to Phosphoserine.

This sequence belongs to the nectin family. In terms of processing, glycosylation at Asn-51 reduces adhesive binding.

It localises to the cell membrane. Its subcellular location is the synapse. The protein localises to the cell projection. The protein resides in the axon. Adhesion molecule that engages in homo- and heterophilic interactions with the other nectin-like family members, leading to cell aggregation. Important for synapse organization, providing regulated trans-synaptic adhesion. Preferentially binds to oligodendrocytes. The polypeptide is Cell adhesion molecule 2 (Cadm2) (Rattus norvegicus (Rat)).